We begin with the raw amino-acid sequence, 246 residues long: UDP-N-acetyl-D-mannosaminuronic acid transferase (246 aa).

This sequence belongs to the glycosyltransferase 26 family.

The enzyme catalyses UDP-N-acetyl-alpha-D-mannosaminouronate + N-acetyl-alpha-D-glucosaminyl-di-trans,octa-cis-undecaprenyl diphosphate = beta-D-ManNAcA-(1-&gt;4)-alpha-D-GlcNAc-di-trans,octa-cis-undecaprenyl diphosphate + UDP + H(+). The protein operates within bacterial outer membrane biogenesis; enterobacterial common antigen biosynthesis. Catalyzes the synthesis of Und-PP-GlcNAc-ManNAcA (Lipid II), the second lipid-linked intermediate involved in enterobacterial common antigen (ECA) synthesis. In Serratia proteamaculans (strain 568), this protein is UDP-N-acetyl-D-mannosaminuronic acid transferase.